A 191-amino-acid chain; its full sequence is Small ribosomal subunit protein uS7 (191 aa).

The interval 56-80 (NKSGEQGDGDGEGGGKAGGIKKRSL) is disordered.

Belongs to the universal ribosomal protein uS7 family. As to quaternary structure, part of the 30S ribosomal subunit. Contacts proteins S9 and S11.

Its function is as follows. One of the primary rRNA binding proteins, it binds directly to 16S rRNA where it nucleates assembly of the head domain of the 30S subunit. Is located at the subunit interface close to the decoding center, probably blocks exit of the E-site tRNA. The chain is Small ribosomal subunit protein uS7 from Coxiella burnetii (strain CbuG_Q212) (Coxiella burnetii (strain Q212)).